The sequence spans 344 residues: Exopolyphosphatase 1 (344 aa).

Residues 319–344 (VHTSVRAVGGQPADRNAANRSRGSKP) form a disordered region.

This sequence belongs to the GppA/Ppx family. As to quaternary structure, homodimer.

It catalyses the reaction [phosphate](n) + H2O = [phosphate](n-1) + phosphate + H(+). Its function is as follows. Degradation of inorganic polyphosphates (polyP). Releases orthophosphate processively from the ends of the polyP chain. The protein is Exopolyphosphatase 1 of Mycobacterium bovis (strain ATCC BAA-935 / AF2122/97).